We begin with the raw amino-acid sequence, 128 residues long: Large ribosomal subunit protein uL24 (128 aa).

This sequence belongs to the universal ribosomal protein uL24 family. In terms of assembly, part of the 50S ribosomal subunit.

Its function is as follows. One of two assembly initiator proteins, it binds directly to the 5'-end of the 23S rRNA, where it nucleates assembly of the 50S subunit. In terms of biological role, located at the polypeptide exit tunnel on the outside of the subunit. This is Large ribosomal subunit protein uL24 from Pyrobaculum calidifontis (strain DSM 21063 / JCM 11548 / VA1).